A 165-amino-acid chain; its full sequence is Small ribosomal subunit protein uS17c (165 aa).

The transit peptide at 1–57 (MSLSFSLLKPPLSSSNPNPFLHGTTTKLSLLPSFSALSLSSSPPSSSTTYTFPVIKA) directs the protein to the chloroplast. The segment at 128–165 (AVAPEGRQSSATRPKPIQAASDELGIPLESQVEGDKTV) is disordered.

In terms of assembly, component of the chloroplast small ribosomal subunit (SSU). Mature 70S chloroplast ribosomes of higher plants consist of a small (30S) and a large (50S) subunit. The 30S small subunit contains 1 molecule of ribosomal RNA (16S rRNA) and 24 different proteins. The 50S large subunit contains 3 rRNA molecules (23S, 5S and 4.5S rRNA) and 33 different proteins.

The protein localises to the plastid. It localises to the chloroplast. Functionally, component of the chloroplast ribosome (chloro-ribosome), a dedicated translation machinery responsible for the synthesis of chloroplast genome-encoded proteins, including proteins of the transcription and translation machinery and components of the photosynthetic apparatus. This Spinacia oleracea (Spinach) protein is Small ribosomal subunit protein uS17c (RPS17).